The primary structure comprises 332 residues: Fructose-1,6-bisphosphatase class 1 (332 aa).

Glutamate 94, aspartate 116, leucine 118, and aspartate 119 together coordinate Mg(2+). Residues 119 to 122, asparagine 211, tyrosine 239, 257 to 259, and lysine 269 each bind substrate; these read DGSS and YLY. Position 275 (glutamate 275) interacts with Mg(2+).

Belongs to the FBPase class 1 family. Homotetramer. It depends on Mg(2+) as a cofactor.

Its subcellular location is the cytoplasm. It carries out the reaction beta-D-fructose 1,6-bisphosphate + H2O = beta-D-fructose 6-phosphate + phosphate. It functions in the pathway carbohydrate biosynthesis; Calvin cycle. The polypeptide is Fructose-1,6-bisphosphatase class 1 (Synechococcus sp. (strain JA-2-3B'a(2-13)) (Cyanobacteria bacterium Yellowstone B-Prime)).